The sequence spans 241 residues: Urease accessory protein UreF (241 aa).

The protein belongs to the UreF family. In terms of assembly, ureD, UreF and UreG form a complex that acts as a GTP-hydrolysis-dependent molecular chaperone, activating the urease apoprotein by helping to assemble the nickel containing metallocenter of UreC. The UreE protein probably delivers the nickel.

The protein resides in the cytoplasm. Its function is as follows. Required for maturation of urease via the functional incorporation of the urease nickel metallocenter. The polypeptide is Urease accessory protein UreF (Rhodopseudomonas palustris (strain BisB18)).